An 876-amino-acid polypeptide reads, in one-letter code: Exosome complex component 10 homolog (876 aa).

The segment at 1–22 (MSGEESMPDEEQKQSEEEEEMI) is disordered. The 3'-5' exonuclease domain maps to 279–445 (TMIDTKEKLE…YSYDMLREQL (167 aa)). Mg(2+) contacts are provided by Asp303, Glu305, Asp361, and Asp430. The region spanning 489-569 (NTRQDYALTH…VEARDVKLEK (81 aa)) is the HRDC domain. 3 stretches are compositionally biased toward basic and acidic residues: residues 690 to 730 (EKQE…EFDA), 741 to 752 (VPDDPNKPKDPE), and 834 to 847 (KPVRDNNADFDPFH). The segment at 690-876 (EKQEEEERKE…NRQGTINYKK (187 aa)) is disordered. The span at 848-861 (QKYRLKNKTKKNMA) shows a compositional bias: basic residues.

The protein belongs to the exosome component 10/RRP6 family. As to quaternary structure, component of the RNA exosome complex. Interacts with crn-5. Mg(2+) serves as cofactor. Ubiquitously expressed.

The protein localises to the nucleus. It is found in the nucleolus. The protein resides in the nucleoplasm. Catalytic component of the RNA exosome complex which has 3'-&gt;5' exoribonuclease activity and participates in a multitude of cellular RNA processing and degradation events. Involved in apoptotic DNA degradation. Involved in regulation of antisense ribosomal siRNA production. Involved in response to cold-warm shock. The protein is Exosome complex component 10 homolog of Caenorhabditis elegans.